We begin with the raw amino-acid sequence, 217 residues long: KH domain-containing protein 3 (217 aa).

The segment at 1-40 is involved in RNA binding; that stretch reads MDAPRRFPTLVQLMQPKAMPVEVLGHLPKRFSWFHSEFLK. The 64-residue stretch at 40–103 folds into the KH; atypical domain; the sequence is KNPKVVRLEV…SYQEDTIKMI (64 aa). Residues 129–217 are disordered; sequence QKAETQRSSI…EDARDPVTRL (89 aa). Over residues 138–155 the composition is skewed to basic and acidic residues; the sequence is IEVREAGTQRSVEVREAG. A phosphothreonine; by ATM mark is found at Thr145 and Thr156. 2 stretches are compositionally biased toward polar residues: residues 156–170 and 177–194; these read TQRS…TQGS and AGTQ…TQRS. Ser182 bears the Phosphoserine mark. Residues 205-217 are compositionally biased toward basic and acidic residues; that stretch reads RFREDARDPVTRL.

It belongs to the KHDC1 family. Component of the subcortical maternal complex (SCMC), at least composed of NLRP5, KHDC3L, OOEP, and TLE6 isoform 1. Within the complex, interacts with NLRP5, KHDC3L and TLE6 isoform 1. The SCMC may facilitate translocation of its components between the nuclear and cytoplasmic compartments. Forms a scaffold complex with OOEP/FLOPED, and interacts with BLM and TRIM25 at DNA replication forks. Interacts with PARP1; the interaction is increased following the formation of DNA double-strand breaks. Interacts with NUMA1. In terms of tissue distribution, expression appears to be maximal in germinal vesicle oocytes, it tails off through metaphase II oocytes and is undetectable following the completion of the oocyte to embryo transition.

It is found in the cytoplasm. The protein localises to the cell cortex. It localises to the nucleus. The protein resides in the mitochondrion. Its subcellular location is the cytoskeleton. It is found in the microtubule organizing center. The protein localises to the centrosome. It localises to the chromosome. Component of the subcortical maternal complex (SCMC), a multiprotein complex that plays a key role in early embryonic development. The SCMC complex is a structural constituent of cytoplasmic lattices, which consist in fibrous structures found in the cytoplasm of oocytes and preimplantation embryos. They are required to store maternal proteins critical for embryonic development, such as proteins that control epigenetic reprogramming of the preimplantation embryo, and prevent their degradation or activation. KHDC3 ensures proper spindle assembly by regulating the localization of AURKA via RHOA signaling and of PLK1 via a RHOA-independent process. Required for the localization of MAD2L1 to kinetochores to enable spindle assembly checkpoint function. As part of the OOEP-KHDC3 scaffold, recruits BLM and TRIM25 to DNA replication forks, thereby promoting the ubiquitination of BLM by TRIM25, enhancing BLM retainment at replication forks and therefore promoting stalled replication fork restart. Regulates homologous recombination-mediated DNA repair via recruitment of RAD51 to sites of DNA double-strand breaks, and sustainment of PARP1 activity, which in turn modulates downstream ATM or ATR activation. Activation of ATM or ATR in response to DNA double-strand breaks may be cell-type specific. Its role in DNA double-strand break repair is independent of its role in restarting stalled replication forks. Promotes neural stem cell neurogenesis and neuronal differentiation in the hippocampus. May regulate normal development of learning, memory and anxiety. Capable of binding RNA. The chain is KH domain-containing protein 3 from Homo sapiens (Human).